Reading from the N-terminus, the 127-residue chain is Glycine cleavage system H protein (127 aa).

Residues 24 to 105 (TAVVGITDFA…YNEGWIVKMK (82 aa)) form the Lipoyl-binding domain. Residue lysine 65 is modified to N6-lipoyllysine.

The protein belongs to the GcvH family. The glycine cleavage system is composed of four proteins: P, T, L and H. (R)-lipoate serves as cofactor.

The glycine cleavage system catalyzes the degradation of glycine. The H protein shuttles the methylamine group of glycine from the P protein to the T protein. The chain is Glycine cleavage system H protein from Chlorobaculum parvum (strain DSM 263 / NCIMB 8327) (Chlorobium vibrioforme subsp. thiosulfatophilum).